Reading from the N-terminus, the 286-residue chain is Thymidylate synthase (286 aa).

DUMP is bound at residue 140 to 141 (RR). The active-site Nucleophile is C161. Residues 185 to 188 (RSND), N196, and 226 to 228 (HIY) contribute to the dUMP site. (6R)-5,10-methylene-5,6,7,8-tetrahydrofolate is bound at residue D188. A285 contacts (6R)-5,10-methylene-5,6,7,8-tetrahydrofolate.

This sequence belongs to the thymidylate synthase family. Bacterial-type ThyA subfamily. Homodimer.

The protein localises to the cytoplasm. The catalysed reaction is dUMP + (6R)-5,10-methylene-5,6,7,8-tetrahydrofolate = 7,8-dihydrofolate + dTMP. The protein operates within pyrimidine metabolism; dTTP biosynthesis. Functionally, catalyzes the reductive methylation of 2'-deoxyuridine-5'-monophosphate (dUMP) to 2'-deoxythymidine-5'-monophosphate (dTMP) while utilizing 5,10-methylenetetrahydrofolate (mTHF) as the methyl donor and reductant in the reaction, yielding dihydrofolate (DHF) as a by-product. This enzymatic reaction provides an intracellular de novo source of dTMP, an essential precursor for DNA biosynthesis. In Streptococcus thermophilus (strain CNRZ 1066), this protein is Thymidylate synthase.